A 139-amino-acid chain; its full sequence is 3-hydroxyacyl-[acyl-carrier-protein] dehydratase FabZ (139 aa).

Histidine 46 is an active-site residue.

Belongs to the thioester dehydratase family. FabZ subfamily.

The protein localises to the cytoplasm. It catalyses the reaction a (3R)-hydroxyacyl-[ACP] = a (2E)-enoyl-[ACP] + H2O. Its function is as follows. Involved in unsaturated fatty acids biosynthesis. Catalyzes the dehydration of short chain beta-hydroxyacyl-ACPs and long chain saturated and unsaturated beta-hydroxyacyl-ACPs. The protein is 3-hydroxyacyl-[acyl-carrier-protein] dehydratase FabZ of Streptococcus pyogenes serotype M1.